The chain runs to 330 residues: DNA-directed RNA polymerase subunit alpha (330 aa).

The interval 1 to 236 (MQGSVTEFLK…EQLDAFVDLR (236 aa)) is alpha N-terminal domain (alpha-NTD). An alpha C-terminal domain (alpha-CTD) region spans residues 250-330 (FDPILLRPVD…NWPPASIAED (81 aa)).

It belongs to the RNA polymerase alpha chain family. As to quaternary structure, homodimer. The RNAP catalytic core consists of 2 alpha, 1 beta, 1 beta' and 1 omega subunit. When a sigma factor is associated with the core the holoenzyme is formed, which can initiate transcription.

The enzyme catalyses RNA(n) + a ribonucleoside 5'-triphosphate = RNA(n+1) + diphosphate. In terms of biological role, DNA-dependent RNA polymerase catalyzes the transcription of DNA into RNA using the four ribonucleoside triphosphates as substrates. The sequence is that of DNA-directed RNA polymerase subunit alpha from Vibrio vulnificus (strain CMCP6).